Consider the following 338-residue polypeptide: Aspartate-semialdehyde dehydrogenase (338 aa).

NADP(+)-binding positions include 13–16 and 41–42; these read TGAV and RS. Position 101 (arginine 101) interacts with phosphate. The active-site Acyl-thioester intermediate is cysteine 130. Residue glutamine 157 coordinates substrate. An NADP(+)-binding site is contributed by 160–161; it reads SG. Lysine 214 provides a ligand contact to phosphate. A substrate-binding site is contributed by arginine 236. The Proton acceptor role is filled by histidine 243. Glutamine 316 provides a ligand contact to NADP(+).

It belongs to the aspartate-semialdehyde dehydrogenase family. As to quaternary structure, homodimer.

The catalysed reaction is L-aspartate 4-semialdehyde + phosphate + NADP(+) = 4-phospho-L-aspartate + NADPH + H(+). The protein operates within amino-acid biosynthesis; L-lysine biosynthesis via DAP pathway; (S)-tetrahydrodipicolinate from L-aspartate: step 2/4. Its pathway is amino-acid biosynthesis; L-methionine biosynthesis via de novo pathway; L-homoserine from L-aspartate: step 2/3. It functions in the pathway amino-acid biosynthesis; L-threonine biosynthesis; L-threonine from L-aspartate: step 2/5. Its function is as follows. Catalyzes the NADPH-dependent formation of L-aspartate-semialdehyde (L-ASA) by the reductive dephosphorylation of L-aspartyl-4-phosphate. This chain is Aspartate-semialdehyde dehydrogenase (asd), found in Synechocystis sp. (strain ATCC 27184 / PCC 6803 / Kazusa).